Reading from the N-terminus, the 227-residue chain is uncharacterized protein (227 aa).

In terms of domain architecture, Response regulatory spans 2–115 (KILMIEDNVS…TLVARIKAVI (114 aa)). Aspartate 51 carries the post-translational modification 4-aspartylphosphate. Residues 128 to 226 (EDMIETECFT…VWGVGYKFDE (99 aa)) constitute a DNA-binding region (ompR/PhoB-type).

Phosphorylated by YclK.

The protein resides in the cytoplasm. In terms of biological role, could be member of the two-component regulatory system YclK/YclJ. This is an uncharacterized protein from Bacillus subtilis (strain 168).